The sequence spans 398 residues: 1-deoxy-D-xylulose 5-phosphate reductoisomerase (398 aa).

Residues Thr-10, Gly-11, Ser-12, Ile-13, Asn-38, and Asn-124 each contribute to the NADPH site. Lys-125 is a 1-deoxy-D-xylulose 5-phosphate binding site. Glu-126 contacts NADPH. Residue Asp-150 coordinates Mn(2+). 1-deoxy-D-xylulose 5-phosphate is bound by residues Ser-151, Glu-152, Ser-176, and His-199. Position 152 (Glu-152) interacts with Mn(2+). Gly-205 serves as a coordination point for NADPH. Residues Ser-212, Asn-217, Lys-218, and Glu-221 each contribute to the 1-deoxy-D-xylulose 5-phosphate site. Glu-221 contacts Mn(2+).

The protein belongs to the DXR family. Mg(2+) serves as cofactor. Mn(2+) is required as a cofactor.

The enzyme catalyses 2-C-methyl-D-erythritol 4-phosphate + NADP(+) = 1-deoxy-D-xylulose 5-phosphate + NADPH + H(+). It functions in the pathway isoprenoid biosynthesis; isopentenyl diphosphate biosynthesis via DXP pathway; isopentenyl diphosphate from 1-deoxy-D-xylulose 5-phosphate: step 1/6. Catalyzes the NADPH-dependent rearrangement and reduction of 1-deoxy-D-xylulose-5-phosphate (DXP) to 2-C-methyl-D-erythritol 4-phosphate (MEP). The polypeptide is 1-deoxy-D-xylulose 5-phosphate reductoisomerase (Crocosphaera subtropica (strain ATCC 51142 / BH68) (Cyanothece sp. (strain ATCC 51142))).